The primary structure comprises 361 residues: Thymidine kinase (361 aa).

17-24 (GPHGVGKS) lines the ATP pocket. Residue Glu-46 is the Proton acceptor of the active site. 2 residues coordinate substrate: Tyr-64 and Gln-88. Arg-184 provides a ligand contact to ATP. Arg-190 is a substrate binding site.

It belongs to the herpesviridae thymidine kinase family. Homodimer.

The catalysed reaction is thymidine + ATP = dTMP + ADP + H(+). Its function is as follows. Catalyzes the transfer of the gamma-phospho group of ATP to thymidine to generate dTMP in the salvage pathway of pyrimidine synthesis. The dTMP serves as a substrate for DNA polymerase during viral DNA replication. Allows the virus to be reactivated and to grow in non-proliferative cells lacking a high concentration of phosphorylated nucleic acid precursors. The protein is Thymidine kinase of Saimiriine herpesvirus 1 (strain MV-5-4-PSL) (SaHV-1).